Reading from the N-terminus, the 233-residue chain is Superoxide dismutase [Mn] 3.3, mitochondrial (233 aa).

The N-terminal 29 residues, 1-29 (MALRTLASKNALSFALGGAARPSAESARG), are a transit peptide targeting the mitochondrion. Positions 57, 105, 194, and 198 each coordinate Mn(2+).

The protein belongs to the iron/manganese superoxide dismutase family. As to quaternary structure, homotetramer. Mn(2+) is required as a cofactor. As to expression, predominantly expressed in the embryo late in embryogenesis.

The protein localises to the mitochondrion matrix. It catalyses the reaction 2 superoxide + 2 H(+) = H2O2 + O2. Destroys superoxide anion radicals which are normally produced within the cells and which are toxic to biological systems. This Zea mays (Maize) protein is Superoxide dismutase [Mn] 3.3, mitochondrial (SODA.2).